Reading from the N-terminus, the 415-residue chain is Serine hydroxymethyltransferase 2 (415 aa).

(6S)-5,6,7,8-tetrahydrofolate-binding positions include leucine 121 and 125 to 127; that span reads GHL. Position 229 is an N6-(pyridoxal phosphate)lysine (lysine 229).

It belongs to the SHMT family. Homodimer. Pyridoxal 5'-phosphate serves as cofactor.

The protein resides in the cytoplasm. It catalyses the reaction (6R)-5,10-methylene-5,6,7,8-tetrahydrofolate + glycine + H2O = (6S)-5,6,7,8-tetrahydrofolate + L-serine. The protein operates within one-carbon metabolism; tetrahydrofolate interconversion. It participates in amino-acid biosynthesis; glycine biosynthesis; glycine from L-serine: step 1/1. Functionally, catalyzes the reversible interconversion of serine and glycine with tetrahydrofolate (THF) serving as the one-carbon carrier. This reaction serves as the major source of one-carbon groups required for the biosynthesis of purines, thymidylate, methionine, and other important biomolecules. Also exhibits THF-independent aldolase activity toward beta-hydroxyamino acids, producing glycine and aldehydes, via a retro-aldol mechanism. In Bordetella parapertussis (strain 12822 / ATCC BAA-587 / NCTC 13253), this protein is Serine hydroxymethyltransferase 2.